The following is a 407-amino-acid chain: Probable tRNA sulfurtransferase (407 aa).

The THUMP domain occupies asparagine 61–valine 165. ATP contacts are provided by residues methionine 183–leucine 184, histidine 208–phenylalanine 209, arginine 265, glycine 287, and glutamine 296.

This sequence belongs to the ThiI family.

It is found in the cytoplasm. The enzyme catalyses [ThiI sulfur-carrier protein]-S-sulfanyl-L-cysteine + a uridine in tRNA + 2 reduced [2Fe-2S]-[ferredoxin] + ATP + H(+) = [ThiI sulfur-carrier protein]-L-cysteine + a 4-thiouridine in tRNA + 2 oxidized [2Fe-2S]-[ferredoxin] + AMP + diphosphate. The catalysed reaction is [ThiS sulfur-carrier protein]-C-terminal Gly-Gly-AMP + S-sulfanyl-L-cysteinyl-[cysteine desulfurase] + AH2 = [ThiS sulfur-carrier protein]-C-terminal-Gly-aminoethanethioate + L-cysteinyl-[cysteine desulfurase] + A + AMP + 2 H(+). Its pathway is cofactor biosynthesis; thiamine diphosphate biosynthesis. Functionally, catalyzes the ATP-dependent transfer of a sulfur to tRNA to produce 4-thiouridine in position 8 of tRNAs, which functions as a near-UV photosensor. Also catalyzes the transfer of sulfur to the sulfur carrier protein ThiS, forming ThiS-thiocarboxylate. This is a step in the synthesis of thiazole, in the thiamine biosynthesis pathway. The sulfur is donated as persulfide by IscS. In Staphylococcus aureus (strain bovine RF122 / ET3-1), this protein is Probable tRNA sulfurtransferase.